A 97-amino-acid polypeptide reads, in one-letter code: Co-chaperonin GroES (97 aa).

It belongs to the GroES chaperonin family. As to quaternary structure, heptamer of 7 subunits arranged in a ring. Interacts with the chaperonin GroEL.

Its subcellular location is the cytoplasm. Functionally, together with the chaperonin GroEL, plays an essential role in assisting protein folding. The GroEL-GroES system forms a nano-cage that allows encapsulation of the non-native substrate proteins and provides a physical environment optimized to promote and accelerate protein folding. GroES binds to the apical surface of the GroEL ring, thereby capping the opening of the GroEL channel. This Erwinia tasmaniensis (strain DSM 17950 / CFBP 7177 / CIP 109463 / NCPPB 4357 / Et1/99) protein is Co-chaperonin GroES.